The sequence spans 564 residues: Ovochymase-2 (564 aa).

The signal sequence occupies residues 1–22 (MLISRNKLILLLGIVFFERGKS). A propeptide spans 23–51 (ATLSLPKAPSCGQSLVKVQPWNYFNIFSR) (activation peptide). Residues 52 to 299 (ILGGSQVEKG…VLPWIHEHIQ (248 aa)) form the Peptidase S1 domain. Residues cysteine 77 and cysteine 93 are joined by a disulfide bond. Histidine 92 functions as the Charge relay system in the catalytic mechanism. Asparagine 104 is a glycosylation site (N-linked (GlcNAc...) asparagine). Glutamate 119 serves as a coordination point for Ca(2+). Catalysis depends on aspartate 142, which acts as the Charge relay system. 5 disulfides stabilise this stretch: cysteine 176–cysteine 246, cysteine 207–cysteine 225, cysteine 236–cysteine 265, cysteine 311–cysteine 341, and cysteine 365–cysteine 384. Residue serine 240 is the Charge relay system of the active site. 2 consecutive CUB domains span residues 311–421 (CSEQ…YKAL) and 431–543 (CSYL…VSFI). 2 N-linked (GlcNAc...) asparagine glycosylation sites follow: asparagine 415 and asparagine 451. 2 cysteine pairs are disulfide-bonded: cysteine 431–cysteine 458 and cysteine 485–cysteine 506. The N-linked (GlcNAc...) asparagine glycan is linked to asparagine 530.

The protein belongs to the peptidase S1 family.

It localises to the secreted. Functionally, may be required for sperm ADAM3 processing and consequential sperm fertilizing ability. In vitro, has an endopeptidase activity. The chain is Ovochymase-2 from Homo sapiens (Human).